Here is a 354-residue protein sequence, read N- to C-terminus: GTPase Obg (354 aa).

One can recognise an Obg domain in the interval 1 to 159; sequence MKYIDEAIIH…ADLKLELKVL (159 aa). One can recognise an OBG-type G domain in the interval 160-334; the sequence is ADVGLLGMPN…LTYAIMEFLE (175 aa). Residues 166 to 173, 191 to 195, 213 to 216, 284 to 287, and 315 to 317 each bind GTP; these read GMPNAGKS, FTTMH, DIPG, NKVD, and SAM. Residues Ser-173 and Thr-193 each contribute to the Mg(2+) site.

This sequence belongs to the TRAFAC class OBG-HflX-like GTPase superfamily. OBG GTPase family. Monomer. The cofactor is Mg(2+).

The protein localises to the cytoplasm. Its function is as follows. An essential GTPase which binds GTP, GDP and possibly (p)ppGpp with moderate affinity, with high nucleotide exchange rates and a fairly low GTP hydrolysis rate. Plays a role in control of the cell cycle, stress response, ribosome biogenesis and in those bacteria that undergo differentiation, in morphogenesis control. This chain is GTPase Obg, found in Nitrosospira multiformis (strain ATCC 25196 / NCIMB 11849 / C 71).